The primary structure comprises 758 residues: 5-methyltetrahydropteroyltriglutamate--homocysteine methyltransferase (758 aa).

5-methyltetrahydropteroyltri-L-glutamate-binding positions include 17–20 (RELK) and Lys113. L-homocysteine-binding positions include 433–435 (IGS) and Glu486. L-methionine is bound by residues 433–435 (IGS) and Glu486. 5-methyltetrahydropteroyltri-L-glutamate contacts are provided by residues 517 to 518 (RC) and Trp563. Asp601 is a binding site for L-homocysteine. Residue Asp601 participates in L-methionine binding. Glu607 serves as a coordination point for 5-methyltetrahydropteroyltri-L-glutamate. Residues His643, Cys645, and Glu667 each contribute to the Zn(2+) site. The active-site Proton donor is the His696. A Zn(2+)-binding site is contributed by Cys728.

It belongs to the vitamin-B12 independent methionine synthase family. Requires Zn(2+) as cofactor.

It carries out the reaction 5-methyltetrahydropteroyltri-L-glutamate + L-homocysteine = tetrahydropteroyltri-L-glutamate + L-methionine. It participates in amino-acid biosynthesis; L-methionine biosynthesis via de novo pathway; L-methionine from L-homocysteine (MetE route): step 1/1. Catalyzes the transfer of a methyl group from 5-methyltetrahydrofolate to homocysteine resulting in methionine formation. The sequence is that of 5-methyltetrahydropteroyltriglutamate--homocysteine methyltransferase from Nitrosomonas europaea (strain ATCC 19718 / CIP 103999 / KCTC 2705 / NBRC 14298).